Consider the following 21-residue polypeptide: Tricyclic peptide MS-271 (21 aa).

Positions C1 to D9 form a cross-link, 3-cysteinyl-aspartic acid (Cys-Asp). Disulfide bonds link C1-C13 and C7-C19. A D-tryptophan modification is found at W21.

Its function is as follows. Inhibits chicken myosin light chain kinase with an IC(50) of 8 M. Does not inhibit bovine cAMP-dependent protein kinase or rat protein kinase C. Antibacterial activity against the Gram-positive bacteria B.subtilis, E.faecium and S.aureus. No antibacterial activity against the Gram-negative bacteria E.coli, K.pneumoniae, P.aeruginosa, P.vulgaris, S.sonnei and S.typhosa. No antifungal activity against C.albicans. The polypeptide is Tricyclic peptide MS-271 (Streptomyces sp).